A 128-amino-acid polypeptide reads, in one-letter code: Conopressin-conophysin (128 aa).

Positions 1-27 (MTRSAMQMGRLTLVLCLLLLLLLTTQA) are cleaved as a signal peptide. A disulfide bridge links C28 with C33. G36 is subject to Glycine amide. Positions 37 to 44 (GKRDVDER) are excised as a propeptide. 7 disulfide bridges follow: C50–C90, C53–C64, C58–C80, C65–C70, C97–C115, C109–C127, and C116–C121.

Belongs to the vasopressin/oxytocin family. In terms of tissue distribution, expressed by the venom gland.

The protein localises to the secreted. In terms of biological role, targets vasopressin-oxytocin related receptors. Is more active on fish receptors than on their human counterparts, supporting an evolved role of this conopressin in the envenomation process. Acts as an agonist on zebrafish vasopressin receptors V1a1R (EC(50)=10.6 nM), V1a2R (EC(50)=44.06 nM, partial agonist), V2R (EC(50)=299.2 nM) and oxytocin receptor (EC(50)=353.73 nM, partial agonist). Shows a weaker activity on human receptors AVPR1B (EC(50)=51.92 nM), AVPR1A (EC(50)=123.78 nM), AVPR2 (EC(50)=299.2 nM) and oxytocin (OXTR) receptor (EC(50)=455.66 nM, partial agonist). In vivo, exhibits grooming and scratching behavior in mice, following intracerebral injection. This chain is Conopressin-conophysin, found in Conus geographus (Geography cone).